The sequence spans 199 residues: Ribonuclease HII (199 aa).

Residues 7 to 196 form the RNase H type-2 domain; sequence PWVCGVDEAG…VRELMANEKD (190 aa). Residues aspartate 13, glutamate 14, and aspartate 105 each contribute to the a divalent metal cation site.

This sequence belongs to the RNase HII family. It depends on Mn(2+) as a cofactor. The cofactor is Mg(2+).

It localises to the cytoplasm. It catalyses the reaction Endonucleolytic cleavage to 5'-phosphomonoester.. Its function is as follows. Endonuclease that specifically degrades the RNA of RNA-DNA hybrids. The chain is Ribonuclease HII from Nitrosospira multiformis (strain ATCC 25196 / NCIMB 11849 / C 71).